The primary structure comprises 122 residues: U19-hexatoxin-Hi1a (122 aa).

The signal sequence occupies residues 1–18 (MNTMIGFIVLLVSATVLG). Residues 19-80 (DPELDALRKE…YENSNFREKR (62 aa)) constitute a propeptide that is removed on maturation. Intrachain disulfides connect Cys-81/Cys-96, Cys-88/Cys-101, and Cys-95/Cys-116.

In terms of tissue distribution, expressed by the venom gland.

It localises to the secreted. Functionally, probable ion channel inhibitor. In Hadronyche infensa (Fraser island funnel-web spider), this protein is U19-hexatoxin-Hi1a.